The following is a 106-amino-acid chain: MDHFLHIDVNAAQAMMEQKQAHLVDIRDPQSFQLAHAKNAYHLTNQSMVQFMEQAEFDQPVLVMCYHGISSQGAAQYLVNQGFEEVYSVDGGFEAWHRANLPIEAS.

A Rhodanese domain is found at 17 to 105; sequence EQKQAHLVDI…WHRANLPIEA (89 aa). Cysteine 65 serves as the catalytic Cysteine persulfide intermediate.

Belongs to the GlpE family.

The protein resides in the cytoplasm. It carries out the reaction thiosulfate + hydrogen cyanide = thiocyanate + sulfite + 2 H(+). The enzyme catalyses thiosulfate + [thioredoxin]-dithiol = [thioredoxin]-disulfide + hydrogen sulfide + sulfite + 2 H(+). Its function is as follows. Transferase that catalyzes the transfer of sulfur from thiosulfate to thiophilic acceptors such as cyanide or dithiols. May function in a CysM-independent thiosulfate assimilation pathway by catalyzing the conversion of thiosulfate to sulfite, which can then be used for L-cysteine biosynthesis. The polypeptide is Thiosulfate sulfurtransferase GlpE (Vibrio cholerae serotype O1 (strain ATCC 39541 / Classical Ogawa 395 / O395)).